Here is a 341-residue protein sequence, read N- to C-terminus: AB hydrolase superfamily protein C1039.03 (341 aa).

It belongs to the AB hydrolase superfamily.

The protein resides in the cytoplasm. It is found in the nucleus. The chain is AB hydrolase superfamily protein C1039.03 from Schizosaccharomyces pombe (strain 972 / ATCC 24843) (Fission yeast).